Consider the following 879-residue polypeptide: JmjC domain-containing histone demethylation protein 1 (879 aa).

3 disordered regions span residues 1–45 (MSEQ…EEGK), 117–212 (STSP…PKRK), and 407–449 (KDVK…EGLK). The segment at 23-116 (PEPCPLCRET…KWYCAPCLAR (94 aa)) adopts a PHD-type zinc-finger fold. Composition is skewed to basic and acidic residues over residues 183–192 (IDMKSEREQQ) and 407–433 (KDVK…HLTE). In terms of domain architecture, JmjC spans 416 to 598 (NDSRESSEIR…TQLRLRQIEI (183 aa)). A substrate-binding site is contributed by Thr-472. Fe cation is bound by residues His-475 and Asp-477. Lys-492 serves as a coordination point for substrate. His-566 contacts Fe cation. A disordered region spans residues 763-879 (HPPAWSENRQ…KVEEDMDIDH (117 aa)). Residues 769-782 (ENRQSPQIETTTVQ) are compositionally biased toward polar residues. Residues 786 to 818 (PSTSSSDAISGSGPGASPGASANGGANENEQAE) show a composition bias toward low complexity. Residues 848–864 (FVEKKTVWGPKLDKEKI) show a composition bias toward basic and acidic residues.

Belongs to the JHDM1 histone demethylase family. The cofactor is Fe(2+).

Its subcellular location is the nucleus. The catalysed reaction is N(6),N(6)-dimethyl-L-lysyl(36)-[histone H3] + 2 2-oxoglutarate + 2 O2 = L-lysyl(36)-[histone H3] + 2 formaldehyde + 2 succinate + 2 CO2. Histone demethylase that specifically demethylates 'Lys-36' of histone H3, thereby playing a central role in histone code. This Cryptococcus neoformans var. neoformans serotype D (strain B-3501A) (Filobasidiella neoformans) protein is JmjC domain-containing histone demethylation protein 1 (JHD1).